The following is an 84-amino-acid chain: Cell division topological specificity factor (84 aa).

This sequence belongs to the MinE family.

Functionally, prevents the cell division inhibition by proteins MinC and MinD at internal division sites while permitting inhibition at polar sites. This ensures cell division at the proper site by restricting the formation of a division septum at the midpoint of the long axis of the cell. In Paraburkholderia xenovorans (strain LB400), this protein is Cell division topological specificity factor.